A 622-amino-acid polypeptide reads, in one-letter code: Mitochondrial distribution and morphology protein 34 (622 aa).

Residues 1–195 (MAFNFNWSPL…LPAIIHRLSL (195 aa)) enclose the SMP-LTD domain. Disordered regions lie at residues 211–234 (QVTN…DPVD), 303–322 (PSGL…SHVA), 355–432 (SMGA…IRQP), 445–464 (ERNA…PASR), 482–546 (SLQQ…QTHL), and 581–622 (KMGG…AYRH). Positions 214–225 (NPPLEGPGLDPL) are enriched in low complexity. The segment covering 360 to 372 (RHSKAHARKRKKR) has biased composition (basic residues). Positions 373–384 (VVDLRRRPKNTD) are enriched in basic and acidic residues. Low complexity predominate over residues 388–404 (SVSGESEFTESTSAASV). Composition is skewed to polar residues over residues 482 to 495 (SLQQ…SKSL) and 522 to 532 (NASNYTSSGDS). Composition is skewed to low complexity over residues 533–543 (QQQQQQQQQHQ) and 592–601 (NNKNDNKNNN).

It belongs to the MDM34 family. Component of the ER-mitochondria encounter structure (ERMES) or MDM complex, composed of MMM1, MDM10, MDM12 and MDM34.

It is found in the mitochondrion outer membrane. Functionally, component of the ERMES/MDM complex, which serves as a molecular tether to connect the endoplasmic reticulum (ER) and mitochondria. Components of this complex are involved in the control of mitochondrial shape and protein biogenesis, and function in nonvesicular lipid trafficking between the ER and mitochondria. MDM34 is required for the interaction of the ER-resident membrane protein MMM1 and the outer mitochondrial membrane-resident beta-barrel protein MDM10. This Ajellomyces capsulatus (strain G186AR / H82 / ATCC MYA-2454 / RMSCC 2432) (Darling's disease fungus) protein is Mitochondrial distribution and morphology protein 34.